A 538-amino-acid polypeptide reads, in one-letter code: Histone-arginine methyltransferase CARMER (538 aa).

The 310-residue stretch at 148-457 (ASQYFQFYGY…QSYDVTIDLH (310 aa)) folds into the SAM-dependent MTase PRMT-type domain. 6 residues coordinate S-adenosyl-L-methionine: Gln161, Arg170, Gly194, Glu216, Glu245, and Thr273. Arg508 is subject to Asymmetric dimethylarginine; by autocatalysis.

The protein belongs to the class I-like SAM-binding methyltransferase superfamily. Protein arginine N-methyltransferase family. Homodimer. In terms of processing, the dimethylated protein is the major form.

The protein localises to the cytoplasm. The protein resides in the nucleus. The enzyme catalyses L-arginyl-[protein] + 2 S-adenosyl-L-methionine = N(omega),N(omega)-dimethyl-L-arginyl-[protein] + 2 S-adenosyl-L-homocysteine + 2 H(+). Its function is as follows. Methylates (mono- and asymmetric dimethylation) the guanidino nitrogens of arginyl residues in proteins. May methylate histone H3 at 'Arg-17' and activate transcription via chromatin remodeling. The sequence is that of Histone-arginine methyltransferase CARMER (Art4) from Drosophila virilis (Fruit fly).